Consider the following 204-residue polypeptide: Large ribosomal subunit protein eL15 (204 aa).

The interval 185 to 204 (GGSRRAAWKRKNREHMHRKR) is disordered. The segment covering 190-204 (AAWKRKNREHMHRKR) has biased composition (basic residues).

This sequence belongs to the eukaryotic ribosomal protein eL15 family.

This Drosophila melanogaster (Fruit fly) protein is Large ribosomal subunit protein eL15 (RpL15).